The following is a 111-amino-acid chain: ATP synthase subunit c (111 aa).

Transmembrane regions (helical) follow at residues 38–58 (GLGV…GSGL) and 89–109 (AGIA…LIFV).

This sequence belongs to the ATPase C chain family. As to quaternary structure, F-type ATPases have 2 components, F(1) - the catalytic core - and F(0) - the membrane proton channel. F(1) has five subunits: alpha(3), beta(3), gamma(1), delta(1), epsilon(1). F(0) has three main subunits: a(1), b(2) and c(10-14). The alpha and beta chains form an alternating ring which encloses part of the gamma chain. F(1) is attached to F(0) by a central stalk formed by the gamma and epsilon chains, while a peripheral stalk is formed by the delta and b chains.

It localises to the cell membrane. In terms of biological role, f(1)F(0) ATP synthase produces ATP from ADP in the presence of a proton or sodium gradient. F-type ATPases consist of two structural domains, F(1) containing the extramembraneous catalytic core and F(0) containing the membrane proton channel, linked together by a central stalk and a peripheral stalk. During catalysis, ATP synthesis in the catalytic domain of F(1) is coupled via a rotary mechanism of the central stalk subunits to proton translocation. Its function is as follows. Key component of the F(0) channel; it plays a direct role in translocation across the membrane. A homomeric c-ring of between 10-14 subunits forms the central stalk rotor element with the F(1) delta and epsilon subunits. The sequence is that of ATP synthase subunit c from Mycoplasmopsis synoviae (strain 53) (Mycoplasma synoviae).